Consider the following 578-residue polypeptide: Arginine--tRNA ligase (578 aa).

The 'HIGH' region signature appears at Pro-122 to His-132.

It belongs to the class-I aminoacyl-tRNA synthetase family. Monomer.

The protein localises to the cytoplasm. The catalysed reaction is tRNA(Arg) + L-arginine + ATP = L-arginyl-tRNA(Arg) + AMP + diphosphate. This Pseudoalteromonas atlantica (strain T6c / ATCC BAA-1087) protein is Arginine--tRNA ligase.